A 228-amino-acid polypeptide reads, in one-letter code: Protein-L-isoaspartate O-methyltransferase (228 aa).

The tract at residues 1–20 (MVAVSLKMSQPAAPPPPMGE) is disordered. Ser-76 is an active-site residue.

It belongs to the methyltransferase superfamily. L-isoaspartyl/D-aspartyl protein methyltransferase family.

The protein resides in the cytoplasm. It catalyses the reaction [protein]-L-isoaspartate + S-adenosyl-L-methionine = [protein]-L-isoaspartate alpha-methyl ester + S-adenosyl-L-homocysteine. Functionally, catalyzes the methyl esterification of L-isoaspartyl residues in peptides and proteins that result from spontaneous decomposition of normal L-aspartyl and L-asparaginyl residues. It plays a role in the repair and/or degradation of damaged proteins. This is Protein-L-isoaspartate O-methyltransferase from Magnetococcus marinus (strain ATCC BAA-1437 / JCM 17883 / MC-1).